A 715-amino-acid polypeptide reads, in one-letter code: Protein MTSS 2 (715 aa).

The region spanning 1–249 is the IMD domain; it reads METAEKECGA…EQVIKDLKGS (249 aa). Residues 134 to 156 adopt a coiled-coil conformation; sequence HEIKKKSSDTLKLQKKARKGKGD. Low complexity-rich tracts occupy residues 253–274, 284–295, and 312–330; these read WSYQ…SMCS, SSVSSHDSGFVS, and TSQK…TCQS. 3 disordered regions span residues 253-405, 420-485, and 527-562; these read WSYQ…EVSP, LEHQ…RNSN, and IRRT…PTVP. T257 is modified (phosphothreonine). S261 bears the Phosphoserine mark. Polar residues predominate over residues 331–341; the sequence is VSECSSPTSDW. Basic and acidic residues predominate over residues 360–369; the sequence is DRVEHLRDTE. S404 bears the Phosphoserine mark. Residues 429–442 are compositionally biased toward low complexity; the sequence is SLQYSSGYSTQTTT. The span at 443–455 shows a compositional bias: polar residues; it reads PSCSEDTIPSQGS. A phosphoserine mark is found at S542, S564, S575, S587, S597, and S602. T606 bears the Phosphothreonine mark. The disordered stretch occupies residues 661-690; that stretch reads FPFPTALSATPSEETPTPPPAATSDPPAED. A WH2 domain is found at 687–704; sequence PAEDMLVAIRRGVRLRRT.

Belongs to the MTSS family. As to quaternary structure, interacts (via IMD domain) with RAC1; this interaction may be important to potentiate PDGF-induced RAC1 activation.

Its subcellular location is the cytoplasm. The protein resides in the cell projection. It is found in the ruffle. In terms of biological role, involved in plasma membrane dynamics. Potentiated PDGF-mediated formation of membrane ruffles and lamellipodia in fibroblasts, acting via RAC1 activation. May function in actin bundling. The chain is Protein MTSS 2 (Mtss2) from Mus musculus (Mouse).